The sequence spans 269 residues: JmjC domain-containing protein 8 (269 aa).

The N-terminal stretch at 1-24 is a signal peptide; that stretch reads MAAAGRFGLLLLIVLWTMVTVVLP. N135, N145, and N214 each carry an N-linked (GlcNAc...) asparagine glycan. Positions 147 to 269 constitute a JmjC domain; it reads TEWAPLFQHY…TSVFISTFLG (123 aa).

As to quaternary structure, oligomer. Dimer. Interacts with PKM; regulates angiogenesis and metabolism. N-glycosylated.

The protein localises to the endoplasmic reticulum lumen. It is found in the cytoplasm. Its function is as follows. Functions as a positive regulator of TNF-induced NF-kappaB signaling. Regulates angiogenesis and cellular metabolism through interaction with PKM. This chain is JmjC domain-containing protein 8, found in Rattus norvegicus (Rat).